The sequence spans 190 residues: ADP-ribosylation factor-like protein 6 (190 aa).

Gly2 carries N-myristoyl glycine lipidation. Residues 24 to 31, Thr50, 69 to 73, Gly72, 130 to 133, and Ala164 each bind GTP; these read GLDNSGKT, DMAGQ, and NKMD. Residues Thr31 and Thr50 each contribute to the Mg(2+) site.

This sequence belongs to the small GTPase superfamily. Arf family.

The protein resides in the cytoplasm. The protein is ADP-ribosylation factor-like protein 6 of Caenorhabditis briggsae.